The following is a 257-amino-acid chain: 5-oxoprolinase subunit A (257 aa).

This sequence belongs to the LamB/PxpA family. As to quaternary structure, forms a complex composed of PxpA, PxpB and PxpC.

The catalysed reaction is 5-oxo-L-proline + ATP + 2 H2O = L-glutamate + ADP + phosphate + H(+). Functionally, catalyzes the cleavage of 5-oxoproline to form L-glutamate coupled to the hydrolysis of ATP to ADP and inorganic phosphate. The sequence is that of 5-oxoprolinase subunit A from Pectobacterium atrosepticum (strain SCRI 1043 / ATCC BAA-672) (Erwinia carotovora subsp. atroseptica).